The chain runs to 470 residues: Cell division protein FtsP (470 aa).

A signal peptide (tat-type signal) is located at residues 1–29; sequence MKNCSRRQLLKTTLFSTALFSVPAPLLAA.

Belongs to the FtsP family. In terms of processing, predicted to be exported by the Tat system. The position of the signal peptide cleavage has not been experimentally proven.

The protein resides in the periplasm. Cell division protein that is required for growth during stress conditions. May be involved in protecting or stabilizing the divisomal assembly under conditions of stress. The polypeptide is Cell division protein FtsP (Aggregatibacter aphrophilus (strain NJ8700) (Haemophilus aphrophilus)).